A 955-amino-acid polypeptide reads, in one-letter code: Leucine--tRNA ligase (955 aa).

The 'HIGH' region signature appears at 51–61 (PYLNGVLHAGH). Residues 647-651 (KLSKS) carry the 'KMSKS' region motif. Lys650 lines the ATP pocket.

Belongs to the class-I aminoacyl-tRNA synthetase family.

Its subcellular location is the cytoplasm. The enzyme catalyses tRNA(Leu) + L-leucine + ATP = L-leucyl-tRNA(Leu) + AMP + diphosphate. This chain is Leucine--tRNA ligase, found in Methanococcus maripaludis (strain C5 / ATCC BAA-1333).